The following is a 149-amino-acid chain: D-aminoacyl-tRNA deacylase (149 aa).

The short motif at 137–138 (GP) is the Gly-cisPro motif, important for rejection of L-amino acids element.

It belongs to the DTD family. In terms of assembly, homodimer.

The protein resides in the cytoplasm. The enzyme catalyses glycyl-tRNA(Ala) + H2O = tRNA(Ala) + glycine + H(+). The catalysed reaction is a D-aminoacyl-tRNA + H2O = a tRNA + a D-alpha-amino acid + H(+). Functionally, an aminoacyl-tRNA editing enzyme that deacylates mischarged D-aminoacyl-tRNAs. Also deacylates mischarged glycyl-tRNA(Ala), protecting cells against glycine mischarging by AlaRS. Acts via tRNA-based rather than protein-based catalysis; rejects L-amino acids rather than detecting D-amino acids in the active site. By recycling D-aminoacyl-tRNA to D-amino acids and free tRNA molecules, this enzyme counteracts the toxicity associated with the formation of D-aminoacyl-tRNA entities in vivo and helps enforce protein L-homochirality. This Koribacter versatilis (strain Ellin345) protein is D-aminoacyl-tRNA deacylase.